We begin with the raw amino-acid sequence, 590 residues long: Arginine--tRNA ligase (590 aa).

Positions 138–148 (ANPTGPLHIGH) match the 'HIGH' region motif.

The protein belongs to the class-I aminoacyl-tRNA synthetase family. As to quaternary structure, monomer.

It localises to the cytoplasm. It carries out the reaction tRNA(Arg) + L-arginine + ATP = L-arginyl-tRNA(Arg) + AMP + diphosphate. The polypeptide is Arginine--tRNA ligase (Orientia tsutsugamushi (strain Boryong) (Rickettsia tsutsugamushi)).